The following is a 1150-amino-acid chain: Fl(2)d-associated complex component (1150 aa).

Residues 1–10 (MEKKAKESLR) are compositionally biased toward basic and acidic residues. 4 disordered regions span residues 1–444 (MEKK…EEER), 477–710 (QGRE…PPPL), 833–914 (ASED…MDTN), and 1034–1053 (KEQG…AKIP). Residues 11–20 (RYKKAARHSA) show a composition bias toward basic residues. Low complexity predominate over residues 21–44 (THSSSSDSTSDSDSGSSSYSSTDS). Residues 47–69 (GVGGVGVGVGVPGGAGGPGGSGS) show a composition bias toward gly residues. The span at 72 to 97 (GHPHTHGHGHHPRSAERHHRKKKSSR) shows a compositional bias: basic residues. A compositionally biased stretch (low complexity) spans 98–107 (RGGSSSGDEP). 2 stretches are compositionally biased toward basic residues: residues 110–144 (SRRK…KKRA) and 162–175 (AKLK…RLRA). Residues 122–147 (KKLVAKRNHIKRKLKEARLKKRAAAA) adopt a coiled-coil conformation. Positions 176–199 (ASKEQRERDKLRVVQRDRERDHHR) are enriched in basic and acidic residues. The span at 202–215 (SSRSPPSSSTTTTT) shows a compositional bias: low complexity. Positions 269 to 347 (PSLERERERE…KLRRQEEEEG (79 aa)) form a coiled coil. Composition is skewed to basic and acidic residues over residues 270–414 (SLER…DEMR), 428–444 (YAPR…EEER), and 492–529 (PDER…PEWE). Gly residues predominate over residues 537–558 (AGGGPGGPSGTPGRPGGFVGGP). Composition is skewed to basic and acidic residues over residues 589 to 611 (ERER…DRPD) and 630 to 640 (WLEHDQREKPR). A compositionally biased stretch (pro residues) spans 660–669 (PPAPSHPHPA). Over residues 693 to 702 (GHGDHGERPG) the composition is skewed to basic and acidic residues. The segment covering 851-861 (QSLNLNQSLSS) has biased composition (low complexity). The segment covering 879–889 (ELSEISDSDDD) has biased composition (acidic residues). Residues 890-903 (ILNKTDKVRPKNEL) are compositionally biased toward basic and acidic residues. Residues 905–914 (TETEQEMDTN) show a composition bias toward acidic residues.

Belongs to the ZC3H13 family. As to quaternary structure, component of the WMM complex, a N6-methyltransferase complex composed of a catalytic subcomplex, named MAC, and of an associated subcomplex, named MACOM. The MAC subcomplex is composed of Ime4/Mettl3 and Mettl14. The MACOM subcomplex is composed of fl(2)d, Flacc/Xio, Hakai, vir, and, in some cases of nito. As to expression, widely expressed during embryogenesis but shows enrichment in the neuroectoderm.

The protein resides in the nucleus. In terms of biological role, associated component of the WMM complex, a complex that mediates N6-methyladenosine (m6A) methylation of mRNAs, a modification that plays a role in the efficiency of mRNA splicing and is required for sex determination. In the WMM complex, acts as a key regulator of m6A methylation by bridging fl(2)d to the RNA-binding component nito. Required for sex determination and dosage compensation via Sxl alternative splicing: m6A methylation acts as a key regulator of Sxl pre-mRNA and promotes female-specific alternative splicing of Sxl, which determines female physiognomy. The sequence is that of Fl(2)d-associated complex component from Drosophila melanogaster (Fruit fly).